The sequence spans 409 residues: Dual-specificity RNA methyltransferase RlmN (409 aa).

Glu121 acts as the Proton acceptor in catalysis. A Radical SAM core domain is found at Glu127 to Leu376. A disulfide bridge links Cys134 with Cys379. Residues Cys141, Cys145, and Cys148 each coordinate [4Fe-4S] cluster. S-adenosyl-L-methionine contacts are provided by residues Gly205 to Glu206, Ser237, Ser259 to His261, and Asn336. Catalysis depends on Cys379, which acts as the S-methylcysteine intermediate.

Belongs to the radical SAM superfamily. RlmN family. [4Fe-4S] cluster serves as cofactor.

The protein resides in the cytoplasm. The catalysed reaction is adenosine(2503) in 23S rRNA + 2 reduced [2Fe-2S]-[ferredoxin] + 2 S-adenosyl-L-methionine = 2-methyladenosine(2503) in 23S rRNA + 5'-deoxyadenosine + L-methionine + 2 oxidized [2Fe-2S]-[ferredoxin] + S-adenosyl-L-homocysteine. The enzyme catalyses adenosine(37) in tRNA + 2 reduced [2Fe-2S]-[ferredoxin] + 2 S-adenosyl-L-methionine = 2-methyladenosine(37) in tRNA + 5'-deoxyadenosine + L-methionine + 2 oxidized [2Fe-2S]-[ferredoxin] + S-adenosyl-L-homocysteine. Its function is as follows. Specifically methylates position 2 of adenine 2503 in 23S rRNA and position 2 of adenine 37 in tRNAs. m2A2503 modification seems to play a crucial role in the proofreading step occurring at the peptidyl transferase center and thus would serve to optimize ribosomal fidelity. This Agrobacterium fabrum (strain C58 / ATCC 33970) (Agrobacterium tumefaciens (strain C58)) protein is Dual-specificity RNA methyltransferase RlmN.